A 101-amino-acid polypeptide reads, in one-letter code: Small ribosomal subunit protein uS14 (101 aa).

This sequence belongs to the universal ribosomal protein uS14 family. In terms of assembly, part of the 30S ribosomal subunit. Contacts proteins S3 and S10.

Binds 16S rRNA, required for the assembly of 30S particles and may also be responsible for determining the conformation of the 16S rRNA at the A site. This Methylorubrum populi (strain ATCC BAA-705 / NCIMB 13946 / BJ001) (Methylobacterium populi) protein is Small ribosomal subunit protein uS14.